The following is a 115-amino-acid chain: SPbeta prophage-derived uncharacterized membrane protein YosE (115 aa).

Helical transmembrane passes span 20-42 (IVVG…YGLN), 58-78 (VHVT…FVKG), and 95-115 (GKSL…TLFI).

It localises to the cell membrane. The chain is SPbeta prophage-derived uncharacterized membrane protein YosE (yosE) from Bacillus subtilis (strain 168).